A 93-amino-acid polypeptide reads, in one-letter code: Small ribosomal subunit protein bS20 (93 aa).

It belongs to the bacterial ribosomal protein bS20 family.

Binds directly to 16S ribosomal RNA. The chain is Small ribosomal subunit protein bS20 from Dictyoglomus thermophilum (strain ATCC 35947 / DSM 3960 / H-6-12).